We begin with the raw amino-acid sequence, 444 residues long: Probable D-serine dehydratase (444 aa).

Lysine 118 bears the N6-(pyridoxal phosphate)lysine mark.

The protein belongs to the serine/threonine dehydratase family. DsdA subfamily. Pyridoxal 5'-phosphate is required as a cofactor.

It carries out the reaction D-serine = pyruvate + NH4(+). The polypeptide is Probable D-serine dehydratase (Acinetobacter baumannii (strain AB0057)).